A 350-amino-acid chain; its full sequence is UDP-N-acetylenolpyruvoylglucosamine reductase (350 aa).

In terms of domain architecture, FAD-binding PCMH-type spans 24–195 (HVEATARWLL…VAVEFNLPLL (172 aa)). The active site involves R172. S245 functions as the Proton donor in the catalytic mechanism. The active site involves E342.

Belongs to the MurB family. The cofactor is FAD.

It is found in the cytoplasm. It carries out the reaction UDP-N-acetyl-alpha-D-muramate + NADP(+) = UDP-N-acetyl-3-O-(1-carboxyvinyl)-alpha-D-glucosamine + NADPH + H(+). It participates in cell wall biogenesis; peptidoglycan biosynthesis. Functionally, cell wall formation. The chain is UDP-N-acetylenolpyruvoylglucosamine reductase from Xanthomonas euvesicatoria pv. vesicatoria (strain 85-10) (Xanthomonas campestris pv. vesicatoria).